The primary structure comprises 616 residues: Polypeptide N-acetylgalactosaminyltransferase 3 (616 aa).

The helical; Signal-anchor for type II membrane protein transmembrane segment at 13–33 (FFHWKLWKFSIIVFVFLVFLF) threads the bilayer. The tract at residues 182–291 (LPTTSIIIVF…YGWLEPLLAR (110 aa)) is catalytic subdomain A. 3 residues coordinate Mn(2+): Asp275, His277, and His413. The segment at 354-416 (PIRTPTFAGG…PCSVVGHVFR (63 aa)) is catalytic subdomain B. Residue Asn482 is glycosylated (N-linked (GlcNAc...) asparagine). In terms of domain architecture, Ricin B-type lectin spans 512–616 (NRMCLDVGEN…FQKWIFGQND (105 aa)). Cys515 and Cys533 are oxidised to a cystine. UDP-N-acetyl-alpha-D-galactosamine contacts are provided by Asp517, Glu520, His534, and Asn539. A disulfide bridge connects residues Cys588 and Cys601.

It belongs to the glycosyltransferase 2 family. GalNAc-T subfamily. The cofactor is Mn(2+).

The protein localises to the golgi apparatus. It localises to the golgi stack membrane. It catalyses the reaction L-seryl-[protein] + UDP-N-acetyl-alpha-D-galactosamine = a 3-O-[N-acetyl-alpha-D-galactosaminyl]-L-seryl-[protein] + UDP + H(+). The enzyme catalyses L-threonyl-[protein] + UDP-N-acetyl-alpha-D-galactosamine = a 3-O-[N-acetyl-alpha-D-galactosaminyl]-L-threonyl-[protein] + UDP + H(+). It functions in the pathway protein modification; protein glycosylation. Catalyzes the initial reaction in O-linked oligosaccharide biosynthesis, the transfer of an N-acetyl-D-galactosamine residue to a serine or threonine residue on the protein receptor. Glycosylates FGF23. This Taeniopygia guttata (Zebra finch) protein is Polypeptide N-acetylgalactosaminyltransferase 3 (GALNT3).